We begin with the raw amino-acid sequence, 451 residues long: Tubulin alpha chain (451 aa).

GTP is bound at residue Q11. K40 is modified (N6-acetyllysine). GTP-binding residues include E71, G144, T145, T179, N206, and N228. E71 is a Mg(2+) binding site. Residue E254 is part of the active site.

Belongs to the tubulin family. As to quaternary structure, dimer of alpha and beta chains. A typical microtubule is a hollow water-filled tube with an outer diameter of 25 nm and an inner diameter of 15 nM. Alpha-beta heterodimers associate head-to-tail to form protofilaments running lengthwise along the microtubule wall with the beta-tubulin subunit facing the microtubule plus end conferring a structural polarity. Microtubules usually have 13 protofilaments but different protofilament numbers can be found in some organisms and specialized cells. Mg(2+) serves as cofactor. In terms of processing, undergoes a tyrosination/detyrosination cycle, the cyclic removal and re-addition of a C-terminal tyrosine residue by the enzymes tubulin tyrosine carboxypeptidase (TTCP) and tubulin tyrosine ligase (TTL), respectively. Post-translationally, acetylation of alpha chains at Lys-40 stabilizes microtubules and affects affinity and processivity of microtubule motors. This modification has a role in multiple cellular functions, ranging from cell motility, cell cycle progression or cell differentiation to intracellular trafficking and signaling.

It is found in the cytoplasm. Its subcellular location is the cytoskeleton. It catalyses the reaction GTP + H2O = GDP + phosphate + H(+). Its function is as follows. Tubulin is the major constituent of microtubules, a cylinder consisting of laterally associated linear protofilaments composed of alpha- and beta-tubulin heterodimers. Microtubules grow by the addition of GTP-tubulin dimers to the microtubule end, where a stabilizing cap forms. Below the cap, tubulin dimers are in GDP-bound state, owing to GTPase activity of alpha-tubulin. In Chlorella vulgaris (Green alga), this protein is Tubulin alpha chain (TUBA).